Reading from the N-terminus, the 319-residue chain is MSLNFLEFEQPIAELEAKIDSLTAVSRQGEKLDINLDEEVQRLREKSLELTRKIFSDLGAWQIAQLARHPRRPYTLDYIQHIFTDFEELAGDRAYADDKAIVGGLARIDGRPVMVIGHQKGRETKEKIRRNFGMPAPEGYRKALRLMEMAERFKLPIITFIDTPGAYPGVGAEERGQSEAIARNLREMSRLSVPVICTVIGEGGSGGALAIGVGDKVNMLQYSTYSVISPEGCASILWKSAEKAPLAAEAMGITAPRLKELELVDTVISEPLGGAHRDYEAISTSLKAQLLIDLAELDHLTSEELVNRRYQRLMQYGYC.

One can recognise a CoA carboxyltransferase C-terminal domain in the interval 35-296 (NLDEEVQRLR…KAQLLIDLAE (262 aa)).

It belongs to the AccA family. Acetyl-CoA carboxylase is a heterohexamer composed of biotin carboxyl carrier protein (AccB), biotin carboxylase (AccC) and two subunits each of ACCase subunit alpha (AccA) and ACCase subunit beta (AccD).

The protein resides in the cytoplasm. The catalysed reaction is N(6)-carboxybiotinyl-L-lysyl-[protein] + acetyl-CoA = N(6)-biotinyl-L-lysyl-[protein] + malonyl-CoA. The protein operates within lipid metabolism; malonyl-CoA biosynthesis; malonyl-CoA from acetyl-CoA: step 1/1. Functionally, component of the acetyl coenzyme A carboxylase (ACC) complex. First, biotin carboxylase catalyzes the carboxylation of biotin on its carrier protein (BCCP) and then the CO(2) group is transferred by the carboxyltransferase to acetyl-CoA to form malonyl-CoA. The protein is Acetyl-coenzyme A carboxylase carboxyl transferase subunit alpha of Photorhabdus laumondii subsp. laumondii (strain DSM 15139 / CIP 105565 / TT01) (Photorhabdus luminescens subsp. laumondii).